A 285-amino-acid chain; its full sequence is MFSTFVPFLIMFREGLEAALIVSLIASYLKRTQRGQWMGAVWVGVVVAAVLCLAIGIFINETTGEFPQKQQELFEGIIAVVAVCILTYMVFWMRKVSKSVKVHLEGAIDNALNSGRGQGWALVAMVFFAVAREGLESVFFLLAAFQQDVGIGAPIGAILGLVCAILVGMAIYWGGVKLHLAKFFKWTSLFILFVAAGLAAGAIRAFHEAGLWNHFQDIAFDLTDVLSTHSLLGTFLEGMFGYQEAPTVSEVSVYFIYLIPALILFFLPPRSTAGSAIAAARKINP.

Residues 1–4 (MFST) lie on the Periplasmic side of the membrane. A helical membrane pass occupies residues 5–25 (FVPFLIMFREGLEAALIVSLI). Over 26–38 (ASYLKRTQRGQWM) the chain is Cytoplasmic. Residues 39–59 (GAVWVGVVVAAVLCLAIGIFI) traverse the membrane as a helical segment. Topologically, residues 60-72 (NETTGEFPQKQQE) are periplasmic. Residues 73–93 (LFEGIIAVVAVCILTYMVFWM) traverse the membrane as a helical segment. The Cytoplasmic portion of the chain corresponds to 94-121 (RKVSKSVKVHLEGAIDNALNSGRGQGWA). The chain crosses the membrane as a helical span at residues 122 to 142 (LVAMVFFAVAREGLESVFFLL). Topologically, residues 143–150 (AAFQQDVG) are periplasmic. A helical membrane pass occupies residues 151–171 (IGAPIGAILGLVCAILVGMAI). The Cytoplasmic portion of the chain corresponds to 172–182 (YWGGVKLHLAK). Residues 183–203 (FFKWTSLFILFVAAGLAAGAI) traverse the membrane as a helical segment. Residues 204–247 (RAFHEAGLWNHFQDIAFDLTDVLSTHSLLGTFLEGMFGYQEAPT) lie on the Periplasmic side of the membrane. Residues 248-268 (VSEVSVYFIYLIPALILFFLP) form a helical membrane-spanning segment. Residues 269–285 (PRSTAGSAIAAARKINP) lie on the Cytoplasmic side of the membrane.

Belongs to the oxidase-dependent Fe transporter (OFeT) (TC 9.A.10.1) family. In terms of assembly, part of a ferrous iron transporter composed of EfeU, EfeO and EfeB.

It localises to the cell inner membrane. Uptake of Fe(2+) ions across the membrane. The chain is Ferrous iron permease EfeU (efeU) from Yersinia pseudotuberculosis serotype I (strain IP32953).